A 333-amino-acid polypeptide reads, in one-letter code: uncharacterized protein (333 aa).

Positions 67-274 (HFYPTTQVVS…LEMARNLAIE (208 aa)) constitute a Radical SAM core domain. [4Fe-4S] cluster is bound by residues Cys82, Cys86, and Cys89.

The cofactor is [4Fe-4S] cluster.

This is an uncharacterized protein from Methanocaldococcus jannaschii (strain ATCC 43067 / DSM 2661 / JAL-1 / JCM 10045 / NBRC 100440) (Methanococcus jannaschii).